A 113-amino-acid chain; its full sequence is Large ribosomal subunit protein eL31 (113 aa).

It belongs to the eukaryotic ribosomal protein eL31 family.

The sequence is that of Large ribosomal subunit protein eL31 (RPL31) from Candida glabrata (strain ATCC 2001 / BCRC 20586 / JCM 3761 / NBRC 0622 / NRRL Y-65 / CBS 138) (Yeast).